Consider the following 38-residue polypeptide: MSAPNPNKQPVELNRTSLYWGLLLMFVLAVLFSSYFFN.

The chain crosses the membrane as a helical span at residues 17-37; it reads SLYWGLLLMFVLAVLFSSYFF.

Belongs to the PsbL family. In terms of assembly, PSII is composed of 1 copy each of membrane proteins PsbA, PsbB, PsbC, PsbD, PsbE, PsbF, PsbH, PsbI, PsbJ, PsbK, PsbL, PsbM, PsbT, PsbX, PsbY, PsbZ, Psb30/Ycf12, at least 3 peripheral proteins of the oxygen-evolving complex and a large number of cofactors. It forms dimeric complexes.

It localises to the plastid. The protein resides in the chloroplast thylakoid membrane. Functionally, one of the components of the core complex of photosystem II (PSII). PSII is a light-driven water:plastoquinone oxidoreductase that uses light energy to abstract electrons from H(2)O, generating O(2) and a proton gradient subsequently used for ATP formation. It consists of a core antenna complex that captures photons, and an electron transfer chain that converts photonic excitation into a charge separation. This subunit is found at the monomer-monomer interface and is required for correct PSII assembly and/or dimerization. This is Photosystem II reaction center protein L from Emiliania huxleyi (Coccolithophore).